The sequence spans 253 residues: Imidazole glycerol phosphate synthase subunit HisF (253 aa).

Active-site residues include Asp-11 and Asp-130.

Belongs to the HisA/HisF family. Heterodimer of HisH and HisF.

Its subcellular location is the cytoplasm. It carries out the reaction 5-[(5-phospho-1-deoxy-D-ribulos-1-ylimino)methylamino]-1-(5-phospho-beta-D-ribosyl)imidazole-4-carboxamide + L-glutamine = D-erythro-1-(imidazol-4-yl)glycerol 3-phosphate + 5-amino-1-(5-phospho-beta-D-ribosyl)imidazole-4-carboxamide + L-glutamate + H(+). The protein operates within amino-acid biosynthesis; L-histidine biosynthesis; L-histidine from 5-phospho-alpha-D-ribose 1-diphosphate: step 5/9. IGPS catalyzes the conversion of PRFAR and glutamine to IGP, AICAR and glutamate. The HisF subunit catalyzes the cyclization activity that produces IGP and AICAR from PRFAR using the ammonia provided by the HisH subunit. This chain is Imidazole glycerol phosphate synthase subunit HisF, found in Thermotoga sp. (strain RQ2).